A 525-amino-acid polypeptide reads, in one-letter code: GMP synthase [glutamine-hydrolyzing] (525 aa).

A Glutamine amidotransferase type-1 domain is found at 9–207; sequence RILILDFGSQ…ILDICGCEAL (199 aa). Cysteine 86 (nucleophile) is an active-site residue. Catalysis depends on residues histidine 181 and glutamate 183. Positions 208–400 constitute a GMPS ATP-PPase domain; it reads WTPSKIAEDA…LGLPYDMVYR (193 aa). ATP is bound at residue 235–241; sequence SGGVDSS.

Homodimer.

It carries out the reaction XMP + L-glutamine + ATP + H2O = GMP + L-glutamate + AMP + diphosphate + 2 H(+). Its pathway is purine metabolism; GMP biosynthesis; GMP from XMP (L-Gln route): step 1/1. Catalyzes the synthesis of GMP from XMP. The protein is GMP synthase [glutamine-hydrolyzing] of Pseudomonas savastanoi pv. phaseolicola (strain 1448A / Race 6) (Pseudomonas syringae pv. phaseolicola (strain 1448A / Race 6)).